The sequence spans 216 residues: Probable transaldolase (216 aa).

K83 functions as the Schiff-base intermediate with substrate in the catalytic mechanism.

It belongs to the transaldolase family. Type 3B subfamily.

The protein resides in the cytoplasm. The catalysed reaction is D-sedoheptulose 7-phosphate + D-glyceraldehyde 3-phosphate = D-erythrose 4-phosphate + beta-D-fructose 6-phosphate. Its pathway is carbohydrate degradation; pentose phosphate pathway; D-glyceraldehyde 3-phosphate and beta-D-fructose 6-phosphate from D-ribose 5-phosphate and D-xylulose 5-phosphate (non-oxidative stage): step 2/3. Transaldolase is important for the balance of metabolites in the pentose-phosphate pathway. In Caldanaerobacter subterraneus subsp. tengcongensis (strain DSM 15242 / JCM 11007 / NBRC 100824 / MB4) (Thermoanaerobacter tengcongensis), this protein is Probable transaldolase.